Here is a 57-residue protein sequence, read N- to C-terminus: Small hydrophobic protein (57 aa).

Over Met1–Leu8 the chain is Virion surface. The chain crosses the membrane as a helical span at residues Tyr9 to Val29. Residues Ser30–Leu57 lie on the Intravirion side of the membrane.

Belongs to the rubulavirus small hydrophobic protein family. In terms of assembly, interacts with host TNFRSF1A, RIPK1 and IRAK1; these interactions interfere with host NF-kappa-B activation at the level of receptor complexes. Interacts with host protein UBQLN4.

Its subcellular location is the virion membrane. It is found in the host cell membrane. Its function is as follows. Plays a role in the inhibition of the host NF-kappa-B pathway. This inhibition occurs at the receptor level, by preventing the signaling of TNFR1 as well as IL-1R and TLR3. The chain is Small hydrophobic protein (SH) from Homo sapiens (Human).